Consider the following 545-residue polypeptide: Chaperonin GroEL (545 aa).

ATP is bound by residues 29–32 (TMGP), Lys50, 86–90 (DGTTT), Gly414, 477–479 (DAA), and Asp493.

This sequence belongs to the chaperonin (HSP60) family. As to quaternary structure, forms a cylinder of 14 subunits composed of two heptameric rings stacked back-to-back. Interacts with the co-chaperonin GroES.

The protein localises to the cytoplasm. It carries out the reaction ATP + H2O + a folded polypeptide = ADP + phosphate + an unfolded polypeptide.. Together with its co-chaperonin GroES, plays an essential role in assisting protein folding. The GroEL-GroES system forms a nano-cage that allows encapsulation of the non-native substrate proteins and provides a physical environment optimized to promote and accelerate protein folding. The chain is Chaperonin GroEL from Campylobacter jejuni (strain RM1221).